The chain runs to 215 residues: Probable transaldolase (215 aa).

Lysine 83 functions as the Schiff-base intermediate with substrate in the catalytic mechanism.

This sequence belongs to the transaldolase family. Type 3B subfamily.

The protein localises to the cytoplasm. It catalyses the reaction D-sedoheptulose 7-phosphate + D-glyceraldehyde 3-phosphate = D-erythrose 4-phosphate + beta-D-fructose 6-phosphate. Its pathway is carbohydrate degradation; pentose phosphate pathway; D-glyceraldehyde 3-phosphate and beta-D-fructose 6-phosphate from D-ribose 5-phosphate and D-xylulose 5-phosphate (non-oxidative stage): step 2/3. In terms of biological role, transaldolase is important for the balance of metabolites in the pentose-phosphate pathway. This Clostridium perfringens (strain ATCC 13124 / DSM 756 / JCM 1290 / NCIMB 6125 / NCTC 8237 / Type A) protein is Probable transaldolase.